Reading from the N-terminus, the 341-residue chain is Ketol-acid reductoisomerase (NADP(+)) (341 aa).

One can recognise a KARI N-terminal Rossmann domain in the interval 2 to 182 (TDIVYDKDAD…GGLRAGGIRT (181 aa)). NADP(+) is bound by residues 25-28 (YGSQ), K48, S51, S53, and 83-86 (DQHQ). Residue H108 is part of the active site. G134 contributes to the NADP(+) binding site. The KARI C-terminal knotted domain occupies 183 to 328 (TFTEETETDL…RELRKLFAWN (146 aa)). Residues D191, E195, E227, and E231 each coordinate Mg(2+). S252 contacts substrate.

Belongs to the ketol-acid reductoisomerase family. Mg(2+) serves as cofactor.

The catalysed reaction is (2R)-2,3-dihydroxy-3-methylbutanoate + NADP(+) = (2S)-2-acetolactate + NADPH + H(+). It carries out the reaction (2R,3R)-2,3-dihydroxy-3-methylpentanoate + NADP(+) = (S)-2-ethyl-2-hydroxy-3-oxobutanoate + NADPH + H(+). It functions in the pathway amino-acid biosynthesis; L-isoleucine biosynthesis; L-isoleucine from 2-oxobutanoate: step 2/4. It participates in amino-acid biosynthesis; L-valine biosynthesis; L-valine from pyruvate: step 2/4. Functionally, involved in the biosynthesis of branched-chain amino acids (BCAA). Catalyzes an alkyl-migration followed by a ketol-acid reduction of (S)-2-acetolactate (S2AL) to yield (R)-2,3-dihydroxy-isovalerate. In the isomerase reaction, S2AL is rearranged via a Mg-dependent methyl migration to produce 3-hydroxy-3-methyl-2-ketobutyrate (HMKB). In the reductase reaction, this 2-ketoacid undergoes a metal-dependent reduction by NADPH to yield (R)-2,3-dihydroxy-isovalerate. The protein is Ketol-acid reductoisomerase (NADP(+)) of Clavibacter sepedonicus (Clavibacter michiganensis subsp. sepedonicus).